An 87-amino-acid polypeptide reads, in one-letter code: Small ribosomal subunit protein uS15 (87 aa).

Belongs to the universal ribosomal protein uS15 family. As to quaternary structure, part of the 30S ribosomal subunit. Forms a bridge to the 50S subunit in the 70S ribosome, contacting the 23S rRNA.

In terms of biological role, one of the primary rRNA binding proteins, it binds directly to 16S rRNA where it helps nucleate assembly of the platform of the 30S subunit by binding and bridging several RNA helices of the 16S rRNA. Forms an intersubunit bridge (bridge B4) with the 23S rRNA of the 50S subunit in the ribosome. In Dehalococcoides mccartyi (strain ATCC BAA-2266 / KCTC 15142 / 195) (Dehalococcoides ethenogenes (strain 195)), this protein is Small ribosomal subunit protein uS15.